The sequence spans 188 residues: MWYTTVRNPSIALIKQGYHILAEYNLVKEELKNIYAIPSYACGLHWFGVIFVHSGIYAGSVFRFSILLPDNFPVDISLPTVVFSTAVLHPHICPQNKTLDLAHFLNEWRKDEHHIWHPYCAERHLKFMDQLKSPCWKEATSMDCSQPSQYLGHIDSSRQLDEEEANQVVKLHCGRVPEPQREAAEVSL.

The UBC core domain occupies 15 to 174 (KQGYHILAEY…ANQVVKLHCG (160 aa)).

This sequence belongs to the ubiquitin-conjugating enzyme family. FTS subfamily.

This Drosophila simulans (Fruit fly) protein is Protein crossbronx-like.